The primary structure comprises 1265 residues: Methionine synthase (1265 aa).

A Hcy-binding domain is found at 19-338 (RDEINAILQK…DHIREIAEAV (320 aa)). C260, C323, and C324 together coordinate Zn(2+). Positions 371–632 (FVNIGERCNV…IHKELLQLCE (262 aa)) constitute a Pterin-binding domain. (6S)-5,6,7,8-tetrahydrofolate is bound by residues 382-384 (GSR), D449, N470, D537, N579, R585, and R591. The B12-binding N-terminal domain maps to 662-759 (QTDEWRNGPV…FMEKEREETR (98 aa)). Methylcob(III)alamin-binding positions include E709, 782–786 (GDVHD), H785, S830, T834, and A886. The B12-binding domain maps to 772 to 907 (QGTIVLATVK…DENLKDEYFE (136 aa)). The 343-residue stretch at 923-1265 (SLKERRYLPL…LGPILGYDTD (343 aa)) folds into the AdoMet activation domain. S-adenosyl-L-methionine-binding positions include D974, R1172, and 1227-1228 (YF). At T1264 the chain carries Phosphothreonine.

Belongs to the vitamin-B12 dependent methionine synthase family. As to quaternary structure, monomer. Dimer. Forms a multiprotein complex with MMACHC, MMADHC and MTRR. Methylcob(III)alamin serves as cofactor. The cofactor is Zn(2+). Widely expressed. Expressed at the highest levels in pancreas, heart, brain, skeletal muscle and placenta. Expressed at lower levels in lung, liver and kidney.

It localises to the cytoplasm. The enzyme catalyses (6S)-5-methyl-5,6,7,8-tetrahydrofolate + L-homocysteine = (6S)-5,6,7,8-tetrahydrofolate + L-methionine. Its pathway is amino-acid biosynthesis; L-methionine biosynthesis via de novo pathway; L-methionine from L-homocysteine (MetH route): step 1/1. Catalyzes the transfer of a methyl group from methylcob(III)alamin (MeCbl) to homocysteine, yielding enzyme-bound cob(I)alamin and methionine in the cytosol. MeCbl is an active form of cobalamin (vitamin B12) used as a cofactor for methionine biosynthesis. Cob(I)alamin form is regenerated to MeCbl by a transfer of a methyl group from 5-methyltetrahydrofolate. The processing of cobalamin in the cytosol occurs in a multiprotein complex composed of at least MMACHC, MMADHC, MTRR (methionine synthase reductase) and MTR which may contribute to shuttle safely and efficiently cobalamin towards MTR in order to produce methionine. This chain is Methionine synthase, found in Homo sapiens (Human).